The chain runs to 506 residues: Maturase K (506 aa).

This sequence belongs to the intron maturase 2 family. MatK subfamily.

The protein localises to the plastid. The protein resides in the chloroplast. Functionally, usually encoded in the trnK tRNA gene intron. Probably assists in splicing its own and other chloroplast group II introns. The polypeptide is Maturase K (Prunus persica (Peach)).